Consider the following 131-residue polypeptide: D-ribose pyranase (131 aa).

Catalysis depends on H20, which acts as the Proton donor. Residues D28, H98, and 120–122 each bind substrate; that span reads FSN.

It belongs to the RbsD / FucU family. RbsD subfamily. As to quaternary structure, homodecamer.

Its subcellular location is the cytoplasm. The enzyme catalyses beta-D-ribopyranose = beta-D-ribofuranose. The protein operates within carbohydrate metabolism; D-ribose degradation; D-ribose 5-phosphate from beta-D-ribopyranose: step 1/2. In terms of biological role, catalyzes the interconversion of beta-pyran and beta-furan forms of D-ribose. The protein is D-ribose pyranase of Levilactobacillus brevis (strain ATCC 367 / BCRC 12310 / CIP 105137 / JCM 1170 / LMG 11437 / NCIMB 947 / NCTC 947) (Lactobacillus brevis).